Here is a 146-residue protein sequence, read N- to C-terminus: Putative pre-16S rRNA nuclease (146 aa).

The protein belongs to the YqgF nuclease family.

It is found in the cytoplasm. In terms of biological role, could be a nuclease involved in processing of the 5'-end of pre-16S rRNA. This chain is Putative pre-16S rRNA nuclease, found in Dechloromonas aromatica (strain RCB).